The following is a 168-amino-acid chain: Lipoprotein signal peptidase (168 aa).

The next 4 membrane-spanning stretches (helical) occupy residues 5–25 (SPYA…KHLV), 37–57 (LVPF…SMFS), 59–79 (FGDT…LYLA), and 85–105 (GHVI…GNLI). Residues D115 and D133 contribute to the active site. A helical transmembrane segment spans residues 125-145 (SFAIFNLADAFISVGAALVVF).

The protein belongs to the peptidase A8 family.

The protein resides in the cell inner membrane. The catalysed reaction is Release of signal peptides from bacterial membrane prolipoproteins. Hydrolyzes -Xaa-Yaa-Zaa-|-(S,diacylglyceryl)Cys-, in which Xaa is hydrophobic (preferably Leu), and Yaa (Ala or Ser) and Zaa (Gly or Ala) have small, neutral side chains.. It functions in the pathway protein modification; lipoprotein biosynthesis (signal peptide cleavage). In terms of biological role, this protein specifically catalyzes the removal of signal peptides from prolipoproteins. The sequence is that of Lipoprotein signal peptidase from Mesorhizobium japonicum (strain LMG 29417 / CECT 9101 / MAFF 303099) (Mesorhizobium loti (strain MAFF 303099)).